We begin with the raw amino-acid sequence, 1103 residues long: A disintegrin and metalloproteinase with thrombospondin motifs 10 (1103 aa).

An N-terminal signal peptide occupies residues 1–25; that stretch reads MAPACQILRWALALGLGLMFEVTHA. A propeptide spanning residues 26 to 233 is cleaved from the precursor; the sequence is FRSQDEFLSS…TERGQPGLKR (208 aa). N-linked (GlcNAc...) asparagine glycosylation is found at N90, N222, and N323. A disordered region spans residues 213–233; that stretch reads KPPPARPLGNETERGQPGLKR. In terms of domain architecture, Peptidase M12B spans 239 to 457; the sequence is RYVETLVVAD…GLGLCLNNRP (219 aa). 11 disulfide bridges follow: C315-C376, C351-C358, C370-C452, C409-C436, C479-C501, C490-C508, C496-C531, C521-C536, C559-C596, C563-C601, and C574-C586. H392 contacts Zn(2+). The active site involves E393. Zn(2+) contacts are provided by H396 and H402. In terms of domain architecture, Disintegrin spans 460–546; sequence QDFVYPTVAP…VPFGSRPEGV (87 aa). In terms of domain architecture, TSP type-1 1 spans 547–602; that stretch reads DGAWGPWTPWGDCSRTCGGGVSSSSRHCDSPRPTIGGKYCLGERRRHRSCNTDDCP. The tract at residues 706–828 is spacer; sequence ETIEGVFSPA…IARDSLPPYS (123 aa). N-linked (GlcNAc...) asparagine glycosylation is found at N740 and N795. TSP type-1 domains are found at residues 825 to 883, 884 to 945, 947 to 1001, and 1003 to 1058; these read PPYS…NTEP, CPPD…PTCP, EWAA…NLRR, and PPAR…AKCD. N-linked (GlcNAc...) asparagine glycosylation occurs at N892. One can recognise a PLAC domain in the interval 1065–1103; the sequence is GPEECKDVNKVAYCPLVLKFQFCSRAYFRQMCCKTCHGH.

As to quaternary structure, interacts with FBN1; this interaction promotes microfibrils assembly. The cofactor is Zn(2+). In terms of processing, glycosylated. Can be O-fucosylated by POFUT2 on a serine or a threonine residue found within the consensus sequence C1-X(2)-(S/T)-C2-G of the TSP type-1 repeat domains where C1 and C2 are the first and second cysteine residue of the repeat, respectively. Fucosylated repeats can then be further glycosylated by the addition of a beta-1,3-glucose residue by the glucosyltransferase, B3GALTL. Fucosylation mediates the efficient secretion of ADAMTS family members. Can also be C-glycosylated with one or two mannose molecules on tryptophan residues within the consensus sequence W-X-X-W of the TPRs, and N-glycosylated. These other glycosylations can also facilitate secretion. In terms of tissue distribution, widely expressed in adult tissues.

It localises to the secreted. The protein localises to the extracellular space. It is found in the extracellular matrix. In terms of biological role, metalloprotease that participate in microfibrils assembly. Microfibrils are extracellular matrix components occurring independently or along with elastin in the formation of elastic tissues. This chain is A disintegrin and metalloproteinase with thrombospondin motifs 10 (ADAMTS10), found in Homo sapiens (Human).